The primary structure comprises 182 residues: Nudix hydrolase 17, mitochondrial (182 aa).

The N-terminal 26 residues, 1–26 (MGVEKMVCLASRTGRQFQRYNKGRRQ), are a transit peptide targeting the mitochondrion. Residues 27-158 (VVGCVPYRFK…WMKEALDVLV (132 aa)) form the Nudix hydrolase domain. Positions 65–86 (GGWELDESVEEAASRECLEEAG) match the Nudix box motif. Glu80 and Glu84 together coordinate Mg(2+).

This sequence belongs to the Nudix hydrolase family. It depends on Mg(2+) as a cofactor. Mn(2+) is required as a cofactor. As to expression, expressed in roots, leaves, stems and inflorescences.

It localises to the mitochondrion. In terms of biological role, probably mediates the hydrolysis of some nucleoside diphosphate derivatives. This chain is Nudix hydrolase 17, mitochondrial (NUDT17), found in Arabidopsis thaliana (Mouse-ear cress).